The primary structure comprises 493 residues: Ecdysteroid UDP-glucosyltransferase (493 aa).

The first 17 residues, 1–17, serve as a signal peptide directing secretion; sequence MIFILLTTLLAVGGAQT.

The protein belongs to the UDP-glycosyltransferase family.

Its function is as follows. Catalyzes the transfer of glucose from UDP-glucose to ecdysteroids which are insect molting hormones. Expression of egt interferes with normal insect development and block molting. The chain is Ecdysteroid UDP-glucosyltransferase (egt) from Choristoneura fumiferana defective polyhedrosis virus (Cfdef).